The chain runs to 194 residues: AN1-type zinc finger protein 2A (194 aa).

AN1-type zinc fingers lie at residues 4 to 52 and 94 to 142; these read PDLG…QKDV and KIFT…RPTI. Zn(2+) contacts are provided by Cys-10, Cys-15, Cys-25, Cys-28, Cys-33, His-36, His-42, Cys-44, Cys-100, Cys-105, Cys-115, Cys-118, Cys-123, His-126, His-132, and Cys-134. Residues 145-164 are disordered; the sequence is GCSPVTASESKPSGDPHPGS.

It is found in the cytoplasm. The protein localises to the nucleus. This chain is AN1-type zinc finger protein 2A (ZFAND2A), found in Pongo abelii (Sumatran orangutan).